We begin with the raw amino-acid sequence, 202 residues long: Orotate phosphoribosyltransferase (202 aa).

Residues Lys-93 and Glu-113–Ser-121 contribute to the 5-phospho-alpha-D-ribose 1-diphosphate site. Residues Thr-117 and Arg-145 each coordinate orotate.

Belongs to the purine/pyrimidine phosphoribosyltransferase family. PyrE subfamily. Homodimer. Mg(2+) serves as cofactor.

The catalysed reaction is orotidine 5'-phosphate + diphosphate = orotate + 5-phospho-alpha-D-ribose 1-diphosphate. It functions in the pathway pyrimidine metabolism; UMP biosynthesis via de novo pathway; UMP from orotate: step 1/2. Its function is as follows. Catalyzes the transfer of a ribosyl phosphate group from 5-phosphoribose 1-diphosphate to orotate, leading to the formation of orotidine monophosphate (OMP). This Campylobacter concisus (strain 13826) protein is Orotate phosphoribosyltransferase.